The primary structure comprises 171 residues: S-ribosylhomocysteine lyase (171 aa).

Positions 54, 58, and 128 each coordinate Fe cation.

The protein belongs to the LuxS family. In terms of assembly, homodimer. The cofactor is Fe cation.

The enzyme catalyses S-(5-deoxy-D-ribos-5-yl)-L-homocysteine = (S)-4,5-dihydroxypentane-2,3-dione + L-homocysteine. Involved in the synthesis of autoinducer 2 (AI-2) which is secreted by bacteria and is used to communicate both the cell density and the metabolic potential of the environment. The regulation of gene expression in response to changes in cell density is called quorum sensing. Catalyzes the transformation of S-ribosylhomocysteine (RHC) to homocysteine (HC) and 4,5-dihydroxy-2,3-pentadione (DPD). The chain is S-ribosylhomocysteine lyase from Pectobacterium carotovorum subsp. carotovorum (strain PC1).